Here is a 448-residue protein sequence, read N- to C-terminus: Nucleoprotein (448 aa).

The segment at 1–55 (MSFTPGKQSSSRASSGNRSGNGILKWADQSDQSRNVQTRGRRAQPKQTATSQQPS) is disordered. The segment covering 9 to 22 (SSSRASSGNRSGNG) has biased composition (low complexity). 2 stretches are compositionally biased toward polar residues: residues 29 to 38 (QSDQSRNVQT) and 45 to 55 (PKQTATSQQPS). An RNA-binding region spans residues 52 to 194 (QQPSGGNVVP…GYYIEGSGRS (143 aa)). The region spanning 61-190 (PYYSWFSGIT…VLPQGYYIEG (130 aa)) is the CoV N NTD domain. The RNA site is built by Arg-106, Arg-122, and Arg-164. 3 disordered regions span residues 157 to 231 (TPAD…VTPD), 266 to 297 (ILNK…NFGG), and 385 to 448 (GMMN…TSEI). Position 167 is a phosphoserine; by host (Ser-167). Residue Thr-174 is modified to Phosphothreonine; by host. Ser-191 is subject to Phosphoserine; by host. The segment covering 193–223 (RSAPNSRSTSRASSRASSAGSRSRANSGNRT) has biased composition (low complexity). Residues 259–384 (AKEIRQKILN…ENLNAYQQQD (126 aa)) enclose the CoV N CTD domain. Residues 266–276 (ILNKPRQKRSP) are compositionally biased toward basic residues. Residues 266 to 384 (ILNKPRQKRS…ENLNAYQQQD (119 aa)) are dimerization. Ser-390 is subject to Phosphoserine; by host. Over residues 399–409 (QKNGQGENDNI) the composition is skewed to polar residues. Over residues 422–439 (KSRELTAEDISLLKKMDE) the composition is skewed to basic and acidic residues. Ser-423 carries the post-translational modification Phosphoserine; by host. The residue at position 427 (Thr-427) is a Phosphothreonine; by host.

The protein belongs to the betacoronavirus nucleocapsid protein family. In terms of assembly, homooligomer. Both monomeric and oligomeric forms interact with RNA. Interacts with protein M. Interacts with NSP3; this interaction serves to tether the genome to the newly translated replicase-transcriptase complex at a very early stage of infection. Post-translationally, ADP-ribosylated. The ADP-ribosylation is retained in the virion during infection. In terms of processing, phosphorylated on serine and threonine residues.

The protein resides in the virion. It is found in the host endoplasmic reticulum-Golgi intermediate compartment. Its subcellular location is the host Golgi apparatus. Functionally, packages the positive strand viral genome RNA into a helical ribonucleocapsid (RNP) and plays a fundamental role during virion assembly through its interactions with the viral genome and membrane protein M. Plays an important role in enhancing the efficiency of subgenomic viral RNA transcription as well as viral replication. This chain is Nucleoprotein, found in Bovine coronavirus (strain OK-0514) (BCoV).